The chain runs to 707 residues: Signal transducer and activator of transcription A (707 aa).

Positions 70-89 (LNQSDQFNLGRSNNLTPRTN) are enriched in polar residues. The segment at 70–246 (LNQSDQFNLG…GNPNLSSPQP (177 aa)) is disordered. Low complexity predominate over residues 90–111 (QLQQLQQQQQQQQQPQQQQQQQ). A compositionally biased stretch (polar residues) spans 112-121 (TYGTQSPIHM). The span at 142 to 238 (QQSYNNNNSN…QQQQQQQQGN (97 aa)) shows a compositional bias: low complexity. Residues 242–356 (SSPQPILDTI…IQSILNPQHS (115 aa)) are a coiled coil. A DNA-binding region spans residues 443–487 (KFLAGTRKCSVNLKFGVNIRDLDNVTTTVESDASNPFVVITNECQ). One can recognise an SH2 domain in the interval 583 to 686 (WQEGIIYGYM…FLKLHKDTAL (104 aa)). Residue Y702 is modified to Phosphotyrosine.

This sequence belongs to the transcription factor STAT family. Monomer, in the absence of tyrosine phosphorylation. Homodimer, or heterodimer with another family member, when tyrosine phosphorylated. Post-translationally, tyrosine phosphorylated in response to cAMP. Not tyrosine phosphorylated in growing cells. Tyrosine phosphorylation is first detected at the tight mound stage, continues throughout the slug stage and early culmination, and starts to decrease at mid-culmination. Barely detectable in fruiting bodies.

Its subcellular location is the cytoplasm. It localises to the nucleus. Its function is as follows. Transcription factor that binds to 5'-TTGAATTGA-3' elements in the promoter region of target genes. Functions as a repressor of the ecmB gene. Regulates the differentiation of prestalk cells during development. In Dictyostelium discoideum (Social amoeba), this protein is Signal transducer and activator of transcription A (dstA).